We begin with the raw amino-acid sequence, 212 residues long: Probable GTP-binding protein EngB (212 aa).

Residues 38-210 form the EngB-type G domain; sequence ALPQIAFVGK…KTSLAKCIKL (173 aa). GTP-binding positions include 46–53, 73–77, 91–94, 158–161, and 189–191; these read GKSNVGKS, GRTRQ, DLPG, TKSD, and VSS. Mg(2+) contacts are provided by Ser53 and Thr75.

The protein belongs to the TRAFAC class TrmE-Era-EngA-EngB-Septin-like GTPase superfamily. EngB GTPase family. Requires Mg(2+) as cofactor.

Necessary for normal cell division and for the maintenance of normal septation. In Rickettsia bellii (strain OSU 85-389), this protein is Probable GTP-binding protein EngB.